A 392-amino-acid chain; its full sequence is Aminomethyltransferase, mitochondrial (392 aa).

Residues 1–16 constitute a mitochondrion transit peptide; the sequence is MLRAGCRAALARRHLS. Residues Glu221, Arg250, and Tyr388 each coordinate substrate.

Belongs to the GcvT family. As to quaternary structure, the glycine cleavage system is composed of four proteins: P, T, L and H.

Its subcellular location is the mitochondrion. The catalysed reaction is N(6)-[(R)-S(8)-aminomethyldihydrolipoyl]-L-lysyl-[protein] + (6S)-5,6,7,8-tetrahydrofolate = N(6)-[(R)-dihydrolipoyl]-L-lysyl-[protein] + (6R)-5,10-methylene-5,6,7,8-tetrahydrofolate + NH4(+). Its function is as follows. The glycine cleavage system catalyzes the degradation of glycine. The protein is Aminomethyltransferase, mitochondrial of Gallus gallus (Chicken).